A 434-amino-acid polypeptide reads, in one-letter code: Bifunctional protein GlmU (434 aa).

Residues 1 to 226 are pyrophosphorylase; it reads MNKNKISIVI…ENEYKGVNSK (226 aa). UDP-N-acetyl-alpha-D-glucosamine-binding positions include 11–14, Lys25, Gln77, and 84–85; these read LAAG and GT. A Mg(2+)-binding site is contributed by Asp105. Residues Gly138, Glu152, Asn167, and Asn224 each coordinate UDP-N-acetyl-alpha-D-glucosamine. Mg(2+) is bound at residue Asn224. The segment at 227–247 is linker; that stretch reads KDLSDAEIIMQDKIKNSLMES. Positions 248–434 are N-acetyltransferase; that stretch reads GVTMQLPSTI…DFYYKFFAKK (187 aa). UDP-N-acetyl-alpha-D-glucosamine is bound by residues Arg311 and Lys328. Catalysis depends on His339, which acts as the Proton acceptor. UDP-N-acetyl-alpha-D-glucosamine is bound by residues Tyr342 and Asn353. Residues Ala356, 362–363, Ser381, and Ala399 contribute to the acetyl-CoA site; that span reads NY.

It in the N-terminal section; belongs to the N-acetylglucosamine-1-phosphate uridyltransferase family. In the C-terminal section; belongs to the transferase hexapeptide repeat family. As to quaternary structure, homotrimer. Mg(2+) is required as a cofactor.

The protein resides in the cytoplasm. The enzyme catalyses alpha-D-glucosamine 1-phosphate + acetyl-CoA = N-acetyl-alpha-D-glucosamine 1-phosphate + CoA + H(+). The catalysed reaction is N-acetyl-alpha-D-glucosamine 1-phosphate + UTP + H(+) = UDP-N-acetyl-alpha-D-glucosamine + diphosphate. It functions in the pathway nucleotide-sugar biosynthesis; UDP-N-acetyl-alpha-D-glucosamine biosynthesis; N-acetyl-alpha-D-glucosamine 1-phosphate from alpha-D-glucosamine 6-phosphate (route II): step 2/2. Its pathway is nucleotide-sugar biosynthesis; UDP-N-acetyl-alpha-D-glucosamine biosynthesis; UDP-N-acetyl-alpha-D-glucosamine from N-acetyl-alpha-D-glucosamine 1-phosphate: step 1/1. The protein operates within bacterial outer membrane biogenesis; LPS lipid A biosynthesis. Its function is as follows. Catalyzes the last two sequential reactions in the de novo biosynthetic pathway for UDP-N-acetylglucosamine (UDP-GlcNAc). The C-terminal domain catalyzes the transfer of acetyl group from acetyl coenzyme A to glucosamine-1-phosphate (GlcN-1-P) to produce N-acetylglucosamine-1-phosphate (GlcNAc-1-P), which is converted into UDP-GlcNAc by the transfer of uridine 5-monophosphate (from uridine 5-triphosphate), a reaction catalyzed by the N-terminal domain. The polypeptide is Bifunctional protein GlmU (Sulfurimonas denitrificans (strain ATCC 33889 / DSM 1251) (Thiomicrospira denitrificans (strain ATCC 33889 / DSM 1251))).